Consider the following 620-residue polypeptide: MIQVLLVTLCLAVFPYQGSSIILESGNVNDYEVVYPRKVTVLPKGAVQPKYEDAMQYEFKVNGEPVVLHLEKNKQLFSKDYSETHYSPDGREITTYPLVEDHCYYHGRIENDADSTASISACNGLKGHFKLQGEMYLIDPLKLPDSEAHAVFKYENVEKEDEAPKMCGVTQNWESYEPIKKASQLNLTPEQQAYLDAKKYVEFVVVLDHGMYTKYKDNLDKIKTRIFEIVNTMNEMFIPLNIRVALICLEIWSDKDKFNMTSAANVTSISFRNWRATDLLKRKSHDNAQLLTVIDFDGPTIGKAYMASMCDPKRSVGIIQDHSTINLMMAVTMAHEMGHNLGMDHDEKYCTCGAKSCVMAKALSRQPSKLFSNCSQEDYRKYLIKRRPKCILNEPNGTDIVSPPVCGNELLEVGEECDCGSPTNCQNPCCDAATCKLTPGSQCADGVCCDQCRFTRAGTECRQAKDDCDMADLCTGQSAECPTDRFQRNGHPCLNDNGYCYNRTCPTLKNQCIYFFGPNAAVAKDSCFKGNQKSNNHTYCRKENGKKIPCAPQDIKCGRLYCFRNLPGKKNICSVIYTPTDEDIGMVLPGTKCEDGKVCSNGHCVDVNIAYKSTTGFSQI.

The first 20 residues, Met-1–Ser-20, serve as a signal peptide directing secretion. Residues Ile-21–Pro-189 constitute a propeptide that is removed on maturation. A Peptidase M12B domain is found at Lys-199–Pro-395. Glu-202 lines the Ca(2+) pocket. Asn-259 and Asn-265 each carry an N-linked (GlcNAc...) asparagine glycan. Ca(2+) is bound at residue Asp-286. 3 cysteine pairs are disulfide-bonded: Cys-310–Cys-390, Cys-350–Cys-374, and Cys-352–Cys-357. A Zn(2+)-binding site is contributed by His-335. Residue Glu-336 is part of the active site. Zn(2+) contacts are provided by His-339 and His-345. A glycan (N-linked (GlcNAc...) asparagine) is linked at Asn-373. Ca(2+) contacts are provided by Cys-390 and Asn-393. Asn-396 is a glycosylation site (N-linked (GlcNAc...) asparagine). Residues Pro-403–Asn-489 enclose the Disintegrin domain. Ca(2+)-binding residues include Val-405, Asn-408, Leu-410, Glu-412, Glu-415, and Asp-418. 14 disulfides stabilise this stretch: Cys-406–Cys-435, Cys-417–Cys-430, Cys-419–Cys-425, Cys-429–Cys-452, Cys-443–Cys-449, Cys-448–Cys-474, Cys-461–Cys-481, Cys-468–Cys-500, Cys-493–Cys-505, Cys-512–Cys-562, Cys-527–Cys-573, Cys-540–Cys-550, Cys-557–Cys-599, and Cys-593–Cys-604. The D/ECD-tripeptide motif lies at Asp-467–Asp-469. Residues Asn-502 and Asn-536 are each glycosylated (N-linked (GlcNAc...) asparagine).

The protein belongs to the venom metalloproteinase (M12B) family. P-III subfamily. P-IIIa sub-subfamily. In terms of assembly, monomer. It depends on Zn(2+) as a cofactor. Expressed by the venom gland.

It localises to the secreted. With respect to regulation, inhibited by EDTA and O-phenanthroline. Not inhibited by PMSF, benzamidine, irreversible serine-proteinase inhibitors and cysteine proteinase inhibitor E-64. Functionally, is a potent activator of prothrombin (F2). Does not elicit any hemorrhagic response. Barely inhibits collagen-induced platelet aggregation. Binds neither collagen, nor the jararhagin-monoclonal antibody MAJar3. Hydrolyzes the Aalpha-chain of fibrin and fibrinogen, without affecting the Bbeta- and gamma-chains. Is capable of triggering endothelial pro-inflammatory and procoagulant cell responses, but fails to trigger apoptosis. Induces von Willebrand factor release, and the expression of both ICAM1 and E-selectin (SELE) (without increase in VCAM1) in endothelial cells (HUVEC). Is also able to up-regulate the synthesis of the coagulation factor TF (F3). Enhances nitric oxide (NO) generation, prostacyclin production and interleukin-8 release. In Agkistrodon contortrix laticinctus (Broad-banded copperhead), this protein is Zinc metalloproteinase-disintegrin-like ACLD.